The chain runs to 1392 residues: DNA-directed RNA polymerase subunit beta'' (1392 aa).

Cys-224, Cys-295, Cys-302, and Cys-305 together coordinate Zn(2+).

Belongs to the RNA polymerase beta' chain family. RpoC2 subfamily. In terms of assembly, in plastids the minimal PEP RNA polymerase catalytic core is composed of four subunits: alpha, beta, beta', and beta''. When a (nuclear-encoded) sigma factor is associated with the core the holoenzyme is formed, which can initiate transcription. Requires Zn(2+) as cofactor.

The protein resides in the plastid. The protein localises to the chloroplast. The catalysed reaction is RNA(n) + a ribonucleoside 5'-triphosphate = RNA(n+1) + diphosphate. Functionally, DNA-dependent RNA polymerase catalyzes the transcription of DNA into RNA using the four ribonucleoside triphosphates as substrates. The polypeptide is DNA-directed RNA polymerase subunit beta'' (Solanum lycopersicum (Tomato)).